Here is a 357-residue protein sequence, read N- to C-terminus: Phosphoribosylformylglycinamidine cyclo-ligase (357 aa).

Belongs to the AIR synthase family.

It localises to the cytoplasm. The enzyme catalyses 2-formamido-N(1)-(5-O-phospho-beta-D-ribosyl)acetamidine + ATP = 5-amino-1-(5-phospho-beta-D-ribosyl)imidazole + ADP + phosphate + H(+). The protein operates within purine metabolism; IMP biosynthesis via de novo pathway; 5-amino-1-(5-phospho-D-ribosyl)imidazole from N(2)-formyl-N(1)-(5-phospho-D-ribosyl)glycinamide: step 2/2. The chain is Phosphoribosylformylglycinamidine cyclo-ligase from Allorhizobium ampelinum (strain ATCC BAA-846 / DSM 112012 / S4) (Agrobacterium vitis (strain S4)).